The following is a 194-amino-acid chain: UPF0232 protein in recF-gyrB intergenic region (194 aa).

A compositionally biased stretch (acidic residues) spans 1–14 (MTGPFDDDGPEEDA). The segment at 1–81 (MTGPFDDDGP…GPGPDARDPQ (81 aa)) is disordered. Basic and acidic residues predominate over residues 30–52 (DLVRRTLEEARGAARSQGKDVGR).

It belongs to the UPF0232 family.

This is UPF0232 protein in recF-gyrB intergenic region from Mycolicibacterium smegmatis (Mycobacterium smegmatis).